Consider the following 459-residue polypeptide: Bifunctional protein GlmU (459 aa).

A pyrophosphorylase region spans residues 1–229 (MSNFAIILAA…FDESLGVNDR (229 aa)). Residues 8–11 (LAAG), Lys-22, Gln-72, 77–78 (GT), 101–102 (GD), Gly-139, Glu-154, Asn-169, and Asn-227 each bind UDP-N-acetyl-alpha-D-glucosamine. Asp-102 serves as a coordination point for Ca(2+). Asp-102 is a Mg(2+) binding site. Asn-227 is a binding site for Ca(2+). Asn-227 contacts Mg(2+). Residues 230 to 250 (VALATAESVMRRRINHKHMVN) form a linker region. Residues 251 to 459 (GVSFVNPEAT…TRLPHHPKNQ (209 aa)) form an N-acetyltransferase region. UDP-N-acetyl-alpha-D-glucosamine contacts are provided by Arg-332 and Lys-350. Catalysis depends on His-362, which acts as the Proton acceptor. UDP-N-acetyl-alpha-D-glucosamine-binding residues include Tyr-365 and Asn-376. Acetyl-CoA contacts are provided by residues Ala-379, 385 to 386 (NY), Ser-404, Ala-422, and Arg-439.

It in the N-terminal section; belongs to the N-acetylglucosamine-1-phosphate uridyltransferase family. The protein in the C-terminal section; belongs to the transferase hexapeptide repeat family. As to quaternary structure, homotrimer. Mg(2+) serves as cofactor. Requires Ca(2+) as cofactor.

It localises to the cytoplasm. The enzyme catalyses alpha-D-glucosamine 1-phosphate + acetyl-CoA = N-acetyl-alpha-D-glucosamine 1-phosphate + CoA + H(+). It catalyses the reaction N-acetyl-alpha-D-glucosamine 1-phosphate + UTP + H(+) = UDP-N-acetyl-alpha-D-glucosamine + diphosphate. The protein operates within nucleotide-sugar biosynthesis; UDP-N-acetyl-alpha-D-glucosamine biosynthesis; N-acetyl-alpha-D-glucosamine 1-phosphate from alpha-D-glucosamine 6-phosphate (route II): step 2/2. It participates in nucleotide-sugar biosynthesis; UDP-N-acetyl-alpha-D-glucosamine biosynthesis; UDP-N-acetyl-alpha-D-glucosamine from N-acetyl-alpha-D-glucosamine 1-phosphate: step 1/1. It functions in the pathway bacterial outer membrane biogenesis; LPS lipid A biosynthesis. Catalyzes the last two sequential reactions in the de novo biosynthetic pathway for UDP-N-acetylglucosamine (UDP-GlcNAc). The C-terminal domain catalyzes the transfer of acetyl group from acetyl coenzyme A to glucosamine-1-phosphate (GlcN-1-P) to produce N-acetylglucosamine-1-phosphate (GlcNAc-1-P), which is converted into UDP-GlcNAc by the transfer of uridine 5-monophosphate (from uridine 5-triphosphate), a reaction catalyzed by the N-terminal domain. The polypeptide is Bifunctional protein GlmU (Streptococcus pneumoniae serotype 4 (strain ATCC BAA-334 / TIGR4)).